The sequence spans 526 residues: Glucose-6-phosphate isomerase (526 aa).

Residue Glu-320 is the Proton donor of the active site. Active-site residues include His-349 and Lys-453.

It belongs to the GPI family.

The protein localises to the cytoplasm. It catalyses the reaction alpha-D-glucose 6-phosphate = beta-D-fructose 6-phosphate. It participates in carbohydrate biosynthesis; gluconeogenesis. It functions in the pathway carbohydrate degradation; glycolysis; D-glyceraldehyde 3-phosphate and glycerone phosphate from D-glucose: step 2/4. In terms of biological role, catalyzes the reversible isomerization of glucose-6-phosphate to fructose-6-phosphate. This is Glucose-6-phosphate isomerase from Rippkaea orientalis (strain PCC 8801 / RF-1) (Cyanothece sp. (strain PCC 8801)).